The following is a 296-amino-acid chain: Pantothenate synthetase (296 aa).

37–44 (MGALHTGH) contacts ATP. His44 serves as the catalytic Proton donor. Gln68 lines the (R)-pantoate pocket. Gln68 is a beta-alanine binding site. 160–163 (GQKD) lines the ATP pocket. A (R)-pantoate-binding site is contributed by Gln166. ATP-binding positions include Val189 and 197-200 (TSSR).

It belongs to the pantothenate synthetase family. Homodimer.

The protein localises to the cytoplasm. It catalyses the reaction (R)-pantoate + beta-alanine + ATP = (R)-pantothenate + AMP + diphosphate + H(+). The protein operates within cofactor biosynthesis; (R)-pantothenate biosynthesis; (R)-pantothenate from (R)-pantoate and beta-alanine: step 1/1. Catalyzes the condensation of pantoate with beta-alanine in an ATP-dependent reaction via a pantoyl-adenylate intermediate. The sequence is that of Pantothenate synthetase from Thermobifida fusca (strain YX).